The primary structure comprises 451 residues: uncharacterized protein (451 aa).

The HD domain maps to Arg-50–Leu-147.

This is an uncharacterized protein from Methanocaldococcus jannaschii (strain ATCC 43067 / DSM 2661 / JAL-1 / JCM 10045 / NBRC 100440) (Methanococcus jannaschii).